Here is a 457-residue protein sequence, read N- to C-terminus: MPDLPSAFLPLLLLSKFVTPVTFRHHRYDDLVRTLYKVHNQCPDITRLYNIGRSVKGRYLYVLEFSDYPGIHEPLEPEVKYVGNMHGNEVLGRELLLQLSEFLCEEFRNRNQRILRLIQDTRIHILPSMNPDGYEVAAAQGPNMSGYLVGRNNANGVDLNRNFPDLNTYFYYNSKNGGPNHHLPLPDNWKSQVEPETRAVIQWIRSLNFVLSANMHGGAVVANYPYDKSLEHRFRGPHRTSNSPTPDDELFQTLAKVYSYAHGWMHQGWNCGDYFPDGITNGASWYSLSKGMQDFNYLHTNCFEITLELSCDKFPRQEELQREWLGNREALIQFLEQVHQGIKGMVLDENSNNLTGAVISVTGINHDVTSGEHGDYFRLLLPGTYSVTAKAPGYDPKTVTVTVGPAGPTVVDFQLKRSSSQVYPVQRAPGRGQGGRAKQPRTSRKKDPATKRHRGPA.

An N-terminal signal peptide occupies residues 1-23 (MPDLPSAFLPLLLLSKFVTPVTF). The Peptidase M14 domain maps to 24-338 (RHHRYDDLVR…EALIQFLEQV (315 aa)). The cysteines at positions 42 and 104 are disulfide-linked. His-86, Glu-89, and His-216 together coordinate Zn(2+). Cys-271 and Cys-311 are joined by a disulfide. Glu-308 acts as the Proton donor/acceptor in catalysis. Residues Thr-400, Thr-402, and Thr-409 are each glycosylated (O-linked (GalNAc...) threonine). The tract at residues 418–457 (SSSQVYPVQRAPGRGQGGRAKQPRTSRKKDPATKRHRGPA) is disordered.

The protein belongs to the peptidase M14 family. As to quaternary structure, tetramer of two catalytic chains and two glycosylated inactive chains. It depends on Zn(2+) as a cofactor. In terms of tissue distribution, mainly expressed in liver. Also detected in lung, stomach, intestine, spleen and kidney.

The protein resides in the secreted. Its subcellular location is the extracellular space. The catalysed reaction is Release of a C-terminal basic amino acid, preferentially lysine.. In terms of biological role, protects the body from potent vasoactive and inflammatory peptides containing C-terminal Arg or Lys (such as kinins or anaphylatoxins) which are released into the circulation. This chain is Carboxypeptidase N catalytic chain (Cpn1), found in Mus musculus (Mouse).